Here is a 175-residue protein sequence, read N- to C-terminus: ATP-dependent protease subunit HslV (175 aa).

The active site involves T2. Na(+) contacts are provided by G158, C161, and T164.

Belongs to the peptidase T1B family. HslV subfamily. A double ring-shaped homohexamer of HslV is capped on each side by a ring-shaped HslU homohexamer. The assembly of the HslU/HslV complex is dependent on binding of ATP.

The protein localises to the cytoplasm. The catalysed reaction is ATP-dependent cleavage of peptide bonds with broad specificity.. Allosterically activated by HslU binding. Its function is as follows. Protease subunit of a proteasome-like degradation complex believed to be a general protein degrading machinery. In Haemophilus influenzae (strain ATCC 51907 / DSM 11121 / KW20 / Rd), this protein is ATP-dependent protease subunit HslV.